A 362-amino-acid polypeptide reads, in one-letter code: Chorismate synthase (362 aa).

The NADP(+) site is built by R48 and R54. FMN-binding positions include 125-127 (RSS), 238-239 (NA), G278, 293-297 (KPTSS), and R319.

It belongs to the chorismate synthase family. As to quaternary structure, homotetramer. FMNH2 is required as a cofactor.

It carries out the reaction 5-O-(1-carboxyvinyl)-3-phosphoshikimate = chorismate + phosphate. It participates in metabolic intermediate biosynthesis; chorismate biosynthesis; chorismate from D-erythrose 4-phosphate and phosphoenolpyruvate: step 7/7. Its function is as follows. Catalyzes the anti-1,4-elimination of the C-3 phosphate and the C-6 proR hydrogen from 5-enolpyruvylshikimate-3-phosphate (EPSP) to yield chorismate, which is the branch point compound that serves as the starting substrate for the three terminal pathways of aromatic amino acid biosynthesis. This reaction introduces a second double bond into the aromatic ring system. The protein is Chorismate synthase of Aeromonas salmonicida (strain A449).